A 130-amino-acid chain; its full sequence is Small ribosomal subunit protein uS11 (130 aa).

It belongs to the universal ribosomal protein uS11 family. Part of the 30S ribosomal subunit. Interacts with proteins S7 and S18. Binds to IF-3.

Functionally, located on the platform of the 30S subunit, it bridges several disparate RNA helices of the 16S rRNA. Forms part of the Shine-Dalgarno cleft in the 70S ribosome. This is Small ribosomal subunit protein uS11 from Buchnera aphidicola subsp. Cinara cedri (strain Cc).